The chain runs to 200 residues: ADP-ribosylation factor-like protein 4A (200 aa).

Residue Gly-2 is the site of N-myristoyl glycine attachment. GTP contacts are provided by residues 27–34, 75–79, and 134–137; these read GLDCAGKT, DVGGQ, and NKQD.

The protein belongs to the small GTPase superfamily. Arf family. Interacts with CYTH2. Interacts with KPNA2; the interaction is direct. Does not interact with ARL4A. Myristoylated.

It localises to the cell membrane. The protein resides in the cytoplasm. The protein localises to the nucleus. Its subcellular location is the nucleolus. Functionally, small GTP-binding protein which cycles between an inactive GDP-bound and an active GTP-bound form, and the rate of cycling is regulated by guanine nucleotide exchange factors (GEF) and GTPase-activating proteins (GAP). GTP-binding protein that does not act as an allosteric activator of the cholera toxin catalytic subunit. Recruits CYTH1, CYTH2, CYTH3 and CYTH4 to the plasma membrane in GDP-bound form. The sequence is that of ADP-ribosylation factor-like protein 4A (ARL4A) from Homo sapiens (Human).